Reading from the N-terminus, the 20-residue chain is Short cationic peptide-4c (20 aa).

Residue glutamate 20 is modified to Glutamic acid 1-amide.

As to expression, expressed by the venom gland.

It localises to the secreted. This Cupiennius salei (American wandering spider) protein is Short cationic peptide-4c.